We begin with the raw amino-acid sequence, 104 residues long: Large ribosomal subunit protein uL24 (104 aa).

This sequence belongs to the universal ribosomal protein uL24 family. As to quaternary structure, part of the 50S ribosomal subunit.

Its function is as follows. One of two assembly initiator proteins, it binds directly to the 5'-end of the 23S rRNA, where it nucleates assembly of the 50S subunit. One of the proteins that surrounds the polypeptide exit tunnel on the outside of the subunit. The protein is Large ribosomal subunit protein uL24 of Bartonella henselae (strain ATCC 49882 / DSM 28221 / CCUG 30454 / Houston 1) (Rochalimaea henselae).